The chain runs to 722 residues: Dipeptidyl aminopeptidase BII (722 aa).

The N-terminal stretch at 1-24 (MRPNLLAAAIAVPLSLLAAQIAQA) is a signal peptide. 2 cysteine pairs are disulfide-bonded: Cys70–Cys87 and Cys166–Cys174. His86 acts as the Charge relay system in catalysis. 215-216 (NW) is a binding site for substrate. Catalysis depends on Asp224, which acts as the Charge relay system. Residues Asn330, 655 to 657 (GNS), and 673 to 674 (FD) each bind substrate. Ser657 (charge relay system) is an active-site residue.

Belongs to the peptidase S46 family. Homodimer.

With respect to regulation, completely inhibited by the serine protease inhibitor diisopropyl fluorophosphate (DFP) and potently inhibited by 0.5 mM ZnCl(2), 10 mM o-phenanthlorine, phenylmethanesulfonyl fluoride (PMSF) and N-tosyl-L-phenyl-alanyl chloromethyl ketone (TPCK), but not by N-tosyl-L-lysyl chloromethyl ketone (TLCK). Activity is not affected significantly by protease inhibitors, such as chymostatin, leupeptin, N-ethylmaleimide (NEM), iodoacetate (IAA), L-trans-epoxysuccinyl-leucylamido(4-guanido)butane (E64) and pepstatin A or by CoCl(2), CaCl(2) and EDTA. Exopeptidase that catalyzes the removal of dipeptide units (NH2-P2-P1-) from the free amino termini of oligopeptides and small proteins. Peptide digestion is sequential and substrate recognition is non-specific, with the exception that Pro is not suitable as a P1 residue. Removes many residues of bioactive oligopeptides such as angiotensin I and neuromedin N and also cleaves oxidized insulin B chain. Able to hydrolyze an X-Pro bond, an imido bond. No endopeptidase activity. May play a physiological role in feeding. The sequence is that of Dipeptidyl aminopeptidase BII from Pseudoxanthomonas mexicana.